The chain runs to 494 residues: UDP-N-acetylmuramoyl-L-alanyl-D-glutamate--L-lysine ligase (494 aa).

Position 30 (Ser-30) interacts with UDP-N-acetyl-alpha-D-muramoyl-L-alanyl-D-glutamate. 110–116 (GTNGKTS) contributes to the ATP binding site. UDP-N-acetyl-alpha-D-muramoyl-L-alanyl-D-glutamate is bound by residues 152 to 153 (TT), Ser-179, and Arg-187. At Lys-219 the chain carries N6-carboxylysine. The L-lysine recognition motif signature appears at 406 to 409 (DNPA).

Belongs to the MurCDEF family. MurE subfamily. Post-translationally, carboxylation is probably crucial for Mg(2+) binding and, consequently, for the gamma-phosphate positioning of ATP.

It localises to the cytoplasm. It carries out the reaction UDP-N-acetyl-alpha-D-muramoyl-L-alanyl-D-glutamate + L-lysine + ATP = UDP-N-acetyl-alpha-D-muramoyl-L-alanyl-gamma-D-glutamyl-L-lysine + ADP + phosphate + H(+). It functions in the pathway cell wall biogenesis; peptidoglycan biosynthesis. Its function is as follows. Catalyzes the addition of L-lysine to the nucleotide precursor UDP-N-acetylmuramoyl-L-alanyl-D-glutamate (UMAG) in the biosynthesis of bacterial cell-wall peptidoglycan. This Staphylococcus aureus (strain bovine RF122 / ET3-1) protein is UDP-N-acetylmuramoyl-L-alanyl-D-glutamate--L-lysine ligase.